The primary structure comprises 430 residues: V-type ATP synthase beta chain 1 (430 aa).

It belongs to the ATPase alpha/beta chains family.

Its function is as follows. Produces ATP from ADP in the presence of a proton gradient across the membrane. The V-type beta chain is a regulatory subunit. This Treponema pallidum (strain Nichols) protein is V-type ATP synthase beta chain 1 (atpB1).